A 367-amino-acid chain; its full sequence is DNA replication and repair protein RecF (367 aa).

Residue 30–37 participates in ATP binding; it reads GANGSGKT.

Belongs to the RecF family.

It localises to the cytoplasm. The RecF protein is involved in DNA metabolism; it is required for DNA replication and normal SOS inducibility. RecF binds preferentially to single-stranded, linear DNA. It also seems to bind ATP. The protein is DNA replication and repair protein RecF of Pseudomonas putida (strain GB-1).